The sequence spans 352 residues: Transcription factor MYB51 (352 aa).

2 HTH myb-type domains span residues 10–62 (ELGL…ANYL) and 63–117 (RPDI…KKRL). 2 DNA-binding regions (H-T-H motif) span residues 38 to 62 (WRTL…ANYL) and 90 to 113 (WSAI…NTHI). Disordered regions lie at residues 128 to 157 (KGIT…DLDN) and 198 to 219 (GGPL…SVDS). Positions 203–219 (STSHTTNTTTTSVSVDS) are enriched in low complexity.

In terms of assembly, can form complexes with MYC2, MYC3 or MYC4. As to expression, expressed in vegetative parts of the plant, mainly in mature rosette leaves and in trichomes. Detected in roots, but not in mature flowers or siliques.

It is found in the nucleus. Transcription factor positively regulating indolic glucosinolate biosynthetic pathway genes. The chain is Transcription factor MYB51 (MYB51) from Arabidopsis thaliana (Mouse-ear cress).